Reading from the N-terminus, the 123-residue chain is Maintenance of telomere capping protein 3, mitochondrial (123 aa).

The transit peptide at 1–37 (MMGRNGIRLALKRSFSTYQPPVVEITNITKLWPTLRP) directs the protein to the mitochondrion.

It is found in the mitochondrion. May be involved in telomere capping. In Saccharomyces cerevisiae (strain ATCC 204508 / S288c) (Baker's yeast), this protein is Maintenance of telomere capping protein 3, mitochondrial (MTC3).